The sequence spans 244 residues: Octanoyltransferase (244 aa).

Positions Met-1–Thr-21 are disordered. Residues Ser-9–Thr-21 are compositionally biased toward polar residues. Residues Pro-59–Leu-244 enclose the BPL/LPL catalytic domain. Substrate contacts are provided by residues Arg-101–His-108, Ser-168–Gly-170, and Gly-181–Ser-183. The active-site Acyl-thioester intermediate is the Cys-199.

This sequence belongs to the LipB family.

Its subcellular location is the cytoplasm. It catalyses the reaction octanoyl-[ACP] + L-lysyl-[protein] = N(6)-octanoyl-L-lysyl-[protein] + holo-[ACP] + H(+). Its pathway is protein modification; protein lipoylation via endogenous pathway; protein N(6)-(lipoyl)lysine from octanoyl-[acyl-carrier-protein]: step 1/2. In terms of biological role, catalyzes the transfer of endogenously produced octanoic acid from octanoyl-acyl-carrier-protein onto the lipoyl domains of lipoate-dependent enzymes. Lipoyl-ACP can also act as a substrate although octanoyl-ACP is likely to be the physiological substrate. This chain is Octanoyltransferase, found in Prochlorococcus marinus (strain NATL1A).